The primary structure comprises 110 residues: Large ribosomal subunit protein uL22 (110 aa).

The protein belongs to the universal ribosomal protein uL22 family. In terms of assembly, part of the 50S ribosomal subunit.

Its function is as follows. This protein binds specifically to 23S rRNA; its binding is stimulated by other ribosomal proteins, e.g. L4, L17, and L20. It is important during the early stages of 50S assembly. It makes multiple contacts with different domains of the 23S rRNA in the assembled 50S subunit and ribosome. Functionally, the globular domain of the protein is located near the polypeptide exit tunnel on the outside of the subunit, while an extended beta-hairpin is found that lines the wall of the exit tunnel in the center of the 70S ribosome. The sequence is that of Large ribosomal subunit protein uL22 from Alkaliphilus metalliredigens (strain QYMF).